Here is a 425-residue protein sequence, read N- to C-terminus: Bifunctional phosphoribosylaminoimidazole carboxylase/phosphoribosylaminoimidazole succinocarboxamide synthetase (425 aa).

Ala-2 bears the N-acetylalanine mark. An SAICAR synthetase domain region spans residues 2-260 (ATAVVVNIGK…WVADRVELLL (259 aa)). Tyr-22 is subject to Phosphotyrosine. Lys-36 is subject to N6-acetyllysine. Ser-107 bears the Phosphoserine mark. A Phosphothreonine modification is found at Thr-238. N6-acetyllysine is present on Lys-247. Residues 261–266 (KSDSQC) form a linker region. Positions 267–425 (RVVVLMGSTS…ADKKVRQCNL (159 aa)) are AIR carboxylase domain. Ser-274 is modified (phosphoserine). Ser-332 is a CO2 binding site.

It in the N-terminal section; belongs to the SAICAR synthetase family. The protein in the C-terminal section; belongs to the AIR carboxylase family. Class II subfamily. As to quaternary structure, homooctamer.

The catalysed reaction is 5-amino-1-(5-phospho-D-ribosyl)imidazole-4-carboxylate + L-aspartate + ATP = (2S)-2-[5-amino-1-(5-phospho-beta-D-ribosyl)imidazole-4-carboxamido]succinate + ADP + phosphate + 2 H(+). It carries out the reaction 5-amino-1-(5-phospho-D-ribosyl)imidazole-4-carboxylate + H(+) = 5-amino-1-(5-phospho-beta-D-ribosyl)imidazole + CO2. It functions in the pathway purine metabolism; IMP biosynthesis via de novo pathway; 5-amino-1-(5-phospho-D-ribosyl)imidazole-4-carboxamide from 5-amino-1-(5-phospho-D-ribosyl)imidazole-4-carboxylate: step 1/2. The protein operates within purine metabolism; IMP biosynthesis via de novo pathway; 5-amino-1-(5-phospho-D-ribosyl)imidazole-4-carboxylate from 5-amino-1-(5-phospho-D-ribosyl)imidazole (carboxylase route): step 1/1. In terms of biological role, bifunctional phosphoribosylaminoimidazole carboxylase and phosphoribosylaminoimidazole succinocarboxamide synthetase catalyzing two reactions of the de novo purine biosynthetic pathway. This chain is Bifunctional phosphoribosylaminoimidazole carboxylase/phosphoribosylaminoimidazole succinocarboxamide synthetase, found in Mus musculus (Mouse).